The following is a 408-amino-acid chain: AA9 family lytic polysaccharide monooxygenase A (408 aa).

Residues 1-20 (MKTTTYSLLALAAASKLASA) form the signal peptide. Residues H21 and H103 each coordinate Cu(2+). A disulfide bond links C63 and C186. N151 carries N-linked (GlcNAc...) asparagine glycosylation. O2 is bound at residue H172. Residue Y183 participates in Cu(2+) binding. 2 N-linked (GlcNAc...) asparagine glycosylation sites follow: N331 and N381. In terms of domain architecture, CBM1 spans 369–405 (GVAKQYERCGGINHTGPTTCESGSVCKKWNPYYYQCV).

This sequence belongs to the polysaccharide monooxygenase AA9 family. The cofactor is Cu(2+).

The protein resides in the secreted. It carries out the reaction [(1-&gt;4)-beta-D-glucosyl]n+m + reduced acceptor + O2 = 4-dehydro-beta-D-glucosyl-[(1-&gt;4)-beta-D-glucosyl]n-1 + [(1-&gt;4)-beta-D-glucosyl]m + acceptor + H2O.. In terms of biological role, lytic polysaccharide monooxygenase (LPMO) that depolymerizes crystalline and amorphous polysaccharides via the oxidation of scissile alpha- or beta-(1-4)-glycosidic bonds, yielding C4 oxidation products. Catalysis by LPMOs requires the reduction of the active-site copper from Cu(II) to Cu(I) by a reducing agent and H(2)O(2) or O(2) as a cosubstrate. This is AA9 family lytic polysaccharide monooxygenase A (eglD) from Aspergillus kawachii (strain NBRC 4308) (White koji mold).